Consider the following 632-residue polypeptide: MTKEEKNEKEALIEFFSSYRELFEFFCSNTTIHGAIRLVCSRRNRMKTAFWLVLFLVTFGLMYWQFGLLFGQYFSYPVSINLNVNSDKLPFPAVTVCTLNPYRYKAIQNDLQELDKETQRTLYELYKYNSTGVQGWIPNNQRVKRDRAGLPYLLELLPPGSETHRVSRSVIEEELQVKRREWNIGFKLCNETGGDCFYQTYTSGVDAIREWYRFHYINILARVPQEAAIDGEQLENFIFACRFNEESCTKANYSSFHHAIYGNCYTFNQNQSDQSNLWSSSMPGIKNGLTLVLRTEQHDYIPLLSSVAGARVLVHGHKEPAFMDDNGFNIPPGMETSIGMKKETINRLGGKYSDCSEDGSDVDVKNLFQSEYTEQVCVRSCFQAAMVARCGCGYAFYPLSPGDQYCDYNKHKSWGHCYYKLIIEFTSNKLGCFTKCRKPCLVSEYQLTAGYSKWPNRVSQDWVLHTLSRQYNLTDRNGIAKLNIYFEELNYKTILESPTINMAMLLSLLGSQWSLWFGSSVLSVVEMLELVIDFVIIGVMILLHRYYYKKANEGEETTVVPTPAPAFADLEQQVPHIPRGDLSQRQISVVADITPPPAYESLDLRSVGTLSSRSSSMRSNRSYYEENGGRRN.

The Cytoplasmic portion of the chain corresponds to 1–49 (MTKEEKNEKEALIEFFSSYRELFEFFCSNTTIHGAIRLVCSRRNRMKTA). A helical transmembrane segment spans residues 50 to 70 (FWLVLFLVTFGLMYWQFGLLF). The Extracellular segment spans residues 71 to 520 (GQYFSYPVSI…SQWSLWFGSS (450 aa)). Disulfide bonds link cysteine 97–cysteine 264, cysteine 189–cysteine 196, cysteine 241–cysteine 248, cysteine 355–cysteine 440, cysteine 377–cysteine 417, cysteine 377–cysteine 436, cysteine 381–cysteine 432, cysteine 390–cysteine 417, cysteine 390–cysteine 440, and cysteine 392–cysteine 406. Residues 521–541 (VLSVVEMLELVIDFVIIGVMI) form a helical membrane-spanning segment. Over 542-632 (LLHRYYYKKA…YYEENGGRRN (91 aa)) the chain is Cytoplasmic. The segment covering 612–622 (SRSSSMRSNRS) has biased composition (low complexity). Residues 612–632 (SRSSSMRSNRSYYEENGGRRN) are disordered. The segment covering 623–632 (YYEENGGRRN) has biased composition (basic and acidic residues).

It belongs to the amiloride-sensitive sodium channel (TC 1.A.6) family. SCNN1A subfamily. As to quaternary structure, heterotrimer; containing an alpha/SCNN1A, a beta/SCNN1B and a gamma/SCNN1G subunit. Interacts with shroom1.

It is found in the apical cell membrane. Its subcellular location is the cell projection. It localises to the cilium. The protein localises to the cytoplasmic granule. The protein resides in the cytoplasm. It is found in the cytoplasmic vesicle. Its subcellular location is the secretory vesicle. It localises to the acrosome. The protein localises to the flagellum. The enzyme catalyses Na(+)(in) = Na(+)(out). Its activity is regulated as follows. Originally identified and characterized by its inhibition by the diuretic drug amiloride. This is one of the three pore-forming subunits of the heterotrimeric epithelial sodium channel (ENaC), a critical regulator of sodium balance and fluid homeostasis. ENaC operates in epithelial tissues, where it mediates the electrodiffusion of sodium ions from extracellular fluid through the apical membrane of cells, with water following osmotically. It plays a key role in maintaining sodium homeostasis through electrogenic sodium reabsorption in the kidneys. The chain is Epithelial sodium channel subunit alpha from Xenopus laevis (African clawed frog).